Consider the following 537-residue polypeptide: Chaperonin GroEL 3 (537 aa).

ATP contacts are provided by residues 30–33 (TLGP), 87–91 (DGTTT), glycine 414, 480–482 (DAL), and aspartate 496.

The protein belongs to the chaperonin (HSP60) family. In terms of assembly, forms a cylinder of 14 subunits composed of two heptameric rings stacked back-to-back. Interacts with the co-chaperonin GroES.

It localises to the cytoplasm. The enzyme catalyses ATP + H2O + a folded polypeptide = ADP + phosphate + an unfolded polypeptide.. Its function is as follows. Together with its co-chaperonin GroES, plays an essential role in assisting protein folding. The GroEL-GroES system forms a nano-cage that allows encapsulation of the non-native substrate proteins and provides a physical environment optimized to promote and accelerate protein folding. The chain is Chaperonin GroEL 3 from Acaryochloris marina (strain MBIC 11017).